The chain runs to 374 residues: Peptide chain release factor 2 (374 aa).

Glutamine 250 carries the N5-methylglutamine modification.

Belongs to the prokaryotic/mitochondrial release factor family. Methylated by PrmC. Methylation increases the termination efficiency of RF2.

The protein localises to the cytoplasm. Its function is as follows. Peptide chain release factor 2 directs the termination of translation in response to the peptide chain termination codons UGA and UAA. The protein is Peptide chain release factor 2 of Roseobacter denitrificans (strain ATCC 33942 / OCh 114) (Erythrobacter sp. (strain OCh 114)).